Consider the following 620-residue polypeptide: 1-deoxy-D-xylulose-5-phosphate synthase (620 aa).

Thiamine diphosphate contacts are provided by residues H80 and 121–123 (GHS). D152 contacts Mg(2+). Thiamine diphosphate-binding positions include 153–154 (GA), N181, Y288, and E370. Residue N181 coordinates Mg(2+).

It belongs to the transketolase family. DXPS subfamily. In terms of assembly, homodimer. Mg(2+) is required as a cofactor. Thiamine diphosphate serves as cofactor.

The enzyme catalyses D-glyceraldehyde 3-phosphate + pyruvate + H(+) = 1-deoxy-D-xylulose 5-phosphate + CO2. Its pathway is metabolic intermediate biosynthesis; 1-deoxy-D-xylulose 5-phosphate biosynthesis; 1-deoxy-D-xylulose 5-phosphate from D-glyceraldehyde 3-phosphate and pyruvate: step 1/1. Its function is as follows. Catalyzes the acyloin condensation reaction between C atoms 2 and 3 of pyruvate and glyceraldehyde 3-phosphate to yield 1-deoxy-D-xylulose-5-phosphate (DXP). This Shigella sonnei (strain Ss046) protein is 1-deoxy-D-xylulose-5-phosphate synthase.